Here is a 398-residue protein sequence, read N- to C-terminus: Alpha-ketoglutarate-dependent dioxygenase bsc9 (398 aa).

2 residues coordinate Fe cation: H167 and D169. T212 lines the 2-oxoglutarate pocket. Residue H365 coordinates Fe cation. R377 is a 2-oxoglutarate binding site.

The protein belongs to the TfdA dioxygenase family. Fe(2+) serves as cofactor.

Its pathway is mycotoxin biosynthesis. Alpha-ketoglutarate dependent dioxygenase; part of the gene cluster that mediates the biosynthesis of the diterpene glucoside brassicicene C. In the first step of the brassicicene C biosynthesis, the bifunctional diterpene synthase bsc8 that possesses both prenyl transferase and terpene cyclase activity, converts isopentenyl diphosphate and dimethylallyl diphosphate into geranylgeranyl diphosphate (GGDP) that is further converted into fusicocca-2,10(14)-diene, the first precursor for brassicicene C. Fusicocca-2,10(14)-diene is then substrate of cytochrome P450 monooxygenase bsc1 for hydroxylation at the C-8 position. Oxidation at C-16 position to aldehyde is then catalyzed by the cytochrome P450 monooyxygenase bsc7, yielding fusicocca-2,10(14)-diene-8-beta,16-diol. Follows the isomerization of the double bond and reduction of aldehyde to alcohol catalyzed by the short-chain dehydrogenase/reductase bsc3 to yield the diol compound fusicocca-1,10(14)-diene-8 beta,16-diol. The next step is the oxidation at the C-3 position of fusicocca-2,10(14)-diene-8-beta,16-diol catalyzed by the alpha-ketoglutarate dependent dioxygenase bsc9, to produce a triol compound. Methylation of the hydroxy group at position 16 is performed by the methyltransferase bsc6. 16-O-methylation is followed by oxidation at the C-13 position to ketone and an alkyl shift of the methyl group leads to brassicicene C. Although the probable acetyltransferase bsc4 is included in the gene cluster, no acetylation reactions are necessary for brassicicene C biosynthesis. However, the fact that brassicicene E, which is a structurally related compound having an acetoxy group at position 12, was previously isolated from another strain of A.brassicicola suggests that the ATCC 96836 strain might also produce a small amount of brassicicene E. The chain is Alpha-ketoglutarate-dependent dioxygenase bsc9 from Alternaria brassicicola (Dark leaf spot agent).